A 312-amino-acid polypeptide reads, in one-letter code: Very long chain fatty acid elongase 4 (312 aa).

Asn-20 carries an N-linked (GlcNAc...) asparagine glycan. A run of 7 helical transmembrane segments spans residues 42–62, 78–98, 127–147, 165–185, 188–208, 217–237, and 246–266; these read LMQS…FVWL, VLII…RELF, ALWW…FFIL, MFTL…FFGA, NSFI…GPWI, YLTM…ALSL, and WMHW…LNFY. Over residues 273–292 the composition is skewed to polar residues; it reads PKQSKTGKTATNGISSNGVN. The tract at residues 273–312 is disordered; that stretch reads PKQSKTGKTATNGISSNGVNKSEKALENGKPQKNGKPKGE. Residue Asn-292 is glycosylated (N-linked (GlcNAc...) asparagine). Positions 308-312 match the Di-lysine motif motif; sequence KPKGE.

Belongs to the ELO family. ELOVL4 subfamily. Oligomer. In terms of processing, N-glycosylated. Expressed in the retina, exclusively in photoreceptor cells and in the brain, skin, testis and lens.

It is found in the endoplasmic reticulum membrane. It carries out the reaction a very-long-chain acyl-CoA + malonyl-CoA + H(+) = a very-long-chain 3-oxoacyl-CoA + CO2 + CoA. It catalyses the reaction hexacosanoyl-CoA + malonyl-CoA + H(+) = 3-oxooctacosanyol-CoA + CO2 + CoA. The enzyme catalyses octacosanoyl-CoA + malonyl-CoA + H(+) = 3-oxo-triacontanoyl-CoA + CO2 + CoA. The catalysed reaction is triacontanoyl-CoA + malonyl-CoA + H(+) = 3-oxo-dotriacontanoyl-CoA + CO2 + CoA. It carries out the reaction (19Z,22Z,25Z,28Z,31Z)-tetratriacontapentaenoyl-CoA + malonyl-CoA + H(+) = 3-oxo-(21Z,24Z,27Z,30Z,33Z)-hexatriacontapentaenoyl-CoA + CO2 + CoA. It catalyses the reaction (4Z,7Z,10Z,13Z,16Z,19Z)-docosahexaenoyl-CoA + malonyl-CoA + H(+) = 3-oxo-(6Z,9Z,12Z,15Z,18Z,21Z)-tetracosahexaenoyl-CoA + CO2 + CoA. The enzyme catalyses (7Z,10Z,13Z,16Z)-docosatetraenoyl-CoA + malonyl-CoA + H(+) = (9Z,12Z,15Z,18Z)-3-oxotetracosatetraenoyl-CoA + CO2 + CoA. The catalysed reaction is (11Z,14Z,17Z,20Z,23Z)-hexacosapentaenoyl-CoA + malonyl-CoA + H(+) = 3-oxo-(13Z,16Z,19Z,22Z,25Z)-octacosapentaenoyl-CoA + CO2 + CoA. It carries out the reaction (13Z,16Z,19Z,22Z,25Z)-octacosapentaenoyl-CoA + malonyl-CoA + H(+) = 3-oxo-(15Z,18Z,21Z,24Z,27Z)-triacontapentaenoyl-CoA + CO2 + CoA. It catalyses the reaction (15Z,18Z,21Z,24Z,27Z)-triacontapentaenoyl-CoA + malonyl-CoA + H(+) = 3-oxo-(17Z,20Z,23Z,26Z,29Z)-dotriacontapentaenoyl-CoA + CO2 + CoA. The enzyme catalyses (17Z,20Z,23Z,26Z,29Z)-dotriacontapentaenoyl-CoA + malonyl-CoA + H(+) = 3-oxo-(19Z,22Z,25Z,28Z,31Z)-tetratriacontapentaenoyl-CoA + CO2 + CoA. The catalysed reaction is (21Z,24Z,27Z,30Z,33Z)-hexatriacontapentaenoyl-CoA + malonyl-CoA + H(+) = 3-oxo-(23Z,26Z,29Z,32Z,35Z)-octatriacontapentaenoyl-CoA + CO2 + CoA. It carries out the reaction (11Z,14Z,17Z,20Z)-hexacosatetraenoyl-CoA + malonyl-CoA + H(+) = (13Z,16Z,19Z,22Z)-3-oxooctacosatetraenoyl-CoA + CO2 + CoA. It catalyses the reaction (13Z,16Z,19Z,22Z)-octacosatetraenoyl-CoA + malonyl-CoA + H(+) = 3-oxo-(15Z,18Z,21Z,24Z)-triacontatetraenoyl-CoA + CO2 + CoA. The enzyme catalyses (15Z,18Z,21Z,24Z)-triacontatetraenoyl-CoA + malonyl-CoA + H(+) = 3-oxo-(17Z,20Z,23Z,26Z)-dotriacontatetraenoyl-CoA + CO2 + CoA. The catalysed reaction is (17Z,20Z,23Z,26Z)-dotriacontatetraenoyl-CoA + malonyl-CoA + H(+) = 3-oxo-(19Z,22Z,25Z,28Z)-tetratriacontatetraenoyl-CoA + CO2 + CoA. It carries out the reaction (19Z,22Z,25Z,28Z)-tetratriacontatetraenoyl-CoA + malonyl-CoA + H(+) = 3-oxo-(21Z,24Z,27Z,30Z)-hexatriacontatetraenoyl-CoA + CO2 + CoA. It catalyses the reaction (21Z,24Z,27Z,30Z)-hexatriacontatetraenoyl-CoA + malonyl-CoA + H(+) = 3-oxo-(23Z,26Z,29Z,32Z)-octatriacontatetraenoyl-CoA + CO2 + CoA. The enzyme catalyses (6Z,9Z,12Z,15Z,18Z,21Z)-tetracosahexaenoyl-CoA + malonyl-CoA + H(+) = 3-oxo-(8Z,11Z,14Z,17Z,20Z,23Z)-hexacosahexaenoyl-CoA + CO2 + CoA. The catalysed reaction is (8Z,11Z,14Z,17Z,20Z,23Z)-hexacosahexaenoyl-CoA + malonyl-CoA + H(+) = 3-oxo-(10Z,13Z,16Z,19Z,22Z,25Z)-octacosahexaenoyl-CoA + CO2 + CoA. It carries out the reaction (10Z,13Z,16Z,19Z,22Z,25Z)-octacosahexaenoyl-CoA + malonyl-CoA + H(+) = 3-oxo-(12Z,15Z,18Z,21Z,24Z,27Z)-triacontahexaenoyl-CoA + CO2 + CoA. It catalyses the reaction (12Z,15Z,18Z,21Z,24Z,27Z)-triacontahexaenoyl-CoA + malonyl-CoA + H(+) = 3-oxo-(14Z,17Z,20Z,23Z,26Z,29Z)-dotriacontahexaenoyl-CoA + CO2 + CoA. The enzyme catalyses (14Z,17Z,20Z,23Z,26Z,29Z)-dotriacontahexaenoyl-CoA + malonyl-CoA + H(+) = 3-oxo-(16Z,19Z,22Z,25Z,28Z,31Z)-tetratriacontahexaenoyl-CoA + CO2 + CoA. The catalysed reaction is (16Z,19Z,22Z,25Z,28Z,31Z)-tetratriacontahexaenoyl-CoA + malonyl-CoA + H(+) = 3-oxo-(18Z,21Z,24Z,27Z,30Z,33Z)-hexatriacontahexaenoyl-CoA + CO2 + CoA. It carries out the reaction (9Z,12Z,15Z,18Z,21Z)-tetracosapentaenoyl-CoA + malonyl-CoA + H(+) = 3-oxo-(11Z,14Z,17Z,20Z,23Z)-hexacosapentaenoyl-CoA + CO2 + CoA. It participates in lipid metabolism; fatty acid biosynthesis. Catalyzes the first and rate-limiting reaction of the four reactions that constitute the long-chain fatty acids elongation cycle. This endoplasmic reticulum-bound enzymatic process allows the addition of 2 carbons to the chain of long- and very long-chain fatty acids (VLCFAs) per cycle. Condensing enzyme that catalyzes the synthesis of very long chain saturated (VLC-SFA) and polyunsaturated (PUFA) fatty acids that are involved in multiple biological processes as precursors of membrane lipids and lipid mediators. May play a critical role in early brain and skin development. This Mus musculus (Mouse) protein is Very long chain fatty acid elongase 4.